A 78-amino-acid chain; its full sequence is HssA/B-like protein 29 (78 aa).

Positions 1 to 31 (MTLFSSITSISKTNTSSKSSLNSFSGSSLSM) are disordered.

This sequence belongs to the hssA/B family.

This is HssA/B-like protein 29 (hssl29) from Dictyostelium discoideum (Social amoeba).